The chain runs to 306 residues: tRNA dimethylallyltransferase 1 (306 aa).

15 to 22 (GPTGSGKS) provides a ligand contact to ATP. 17–22 (TGSGKS) lines the substrate pocket. An interaction with substrate tRNA region spans residues 40-43 (DSMQ).

The protein belongs to the IPP transferase family. As to quaternary structure, monomer. Requires Mg(2+) as cofactor.

It carries out the reaction adenosine(37) in tRNA + dimethylallyl diphosphate = N(6)-dimethylallyladenosine(37) in tRNA + diphosphate. Catalyzes the transfer of a dimethylallyl group onto the adenine at position 37 in tRNAs that read codons beginning with uridine, leading to the formation of N6-(dimethylallyl)adenosine (i(6)A). The chain is tRNA dimethylallyltransferase 1 from Citrifermentans bemidjiense (strain ATCC BAA-1014 / DSM 16622 / JCM 12645 / Bem) (Geobacter bemidjiensis).